The sequence spans 1076 residues: Regulator of G-protein signaling protein-like (1076 aa).

The region spanning 645–764 is the RGS domain; the sequence is NLTEVLLNTQ…LFPPHHQEVE (120 aa). A compositionally biased stretch (polar residues) spans 834 to 852; sequence TTAHNTSGRSAPPSTNVRS. The disordered stretch occupies residues 834 to 854; it reads TTAHNTSGRSAPPSTNVRSAD. The helical transmembrane segment at 960 to 982 threads the bilayer; it reads VFHGAIMSVFPVVMYFWKRFCFW.

It localises to the membrane. The chain is Regulator of G-protein signaling protein-like (RGSL1) from Homo sapiens (Human).